A 246-amino-acid chain; its full sequence is D-erythrulose reductase (246 aa).

NADP(+) is bound at residue 13–41 (LVTGAGKGIGRAVAVALCKAGARVTALSR). Ser138 is a substrate binding site. Tyr151 (proton acceptor) is an active-site residue. Lys155 contributes to the NADP(+) binding site.

The protein belongs to the short-chain dehydrogenases/reductases (SDR) family. Homotetramer. In terms of processing, the N-terminus is blocked. Highly expressed in kidney, and also found in high amounts in liver and testis. Low expression seen in all other tissues tested.

It is found in the cytoplasm. It catalyses the reaction D-threitol + NADP(+) = D-erythrulose + NADPH + H(+). The catalysed reaction is xylitol + NADP(+) = L-xylulose + NADPH + H(+). Functionally, catalyzes the reduction of D-erythrulose to D-threitol with the concomitant oxidation of NAD(P)H to NAD(P)(+). NADH is less effective than NADPH. May also catalyze the reduction of L-xylulose. This is D-erythrulose reductase (DER) from Gallus gallus (Chicken).